We begin with the raw amino-acid sequence, 467 residues long: UDP-N-acetylmuramate--L-alanine ligase (467 aa).

Position 123 to 129 (Gly-123 to Thr-129) interacts with ATP.

Belongs to the MurCDEF family.

It is found in the cytoplasm. The catalysed reaction is UDP-N-acetyl-alpha-D-muramate + L-alanine + ATP = UDP-N-acetyl-alpha-D-muramoyl-L-alanine + ADP + phosphate + H(+). It functions in the pathway cell wall biogenesis; peptidoglycan biosynthesis. Functionally, cell wall formation. The chain is UDP-N-acetylmuramate--L-alanine ligase from Arthrobacter sp. (strain FB24).